Consider the following 287-residue polypeptide: 2-dehydro-3-deoxyphosphooctonate aldolase (287 aa).

Belongs to the KdsA family.

It is found in the cytoplasm. The catalysed reaction is D-arabinose 5-phosphate + phosphoenolpyruvate + H2O = 3-deoxy-alpha-D-manno-2-octulosonate-8-phosphate + phosphate. It functions in the pathway carbohydrate biosynthesis; 3-deoxy-D-manno-octulosonate biosynthesis; 3-deoxy-D-manno-octulosonate from D-ribulose 5-phosphate: step 2/3. Its pathway is bacterial outer membrane biogenesis; lipopolysaccharide biosynthesis. The protein is 2-dehydro-3-deoxyphosphooctonate aldolase of Rhodopseudomonas palustris (strain HaA2).